The chain runs to 155 residues: Protein-export protein SecB (155 aa).

It belongs to the SecB family. In terms of assembly, homotetramer, a dimer of dimers. One homotetramer interacts with 1 SecA dimer.

It localises to the cytoplasm. One of the proteins required for the normal export of preproteins out of the cell cytoplasm. It is a molecular chaperone that binds to a subset of precursor proteins, maintaining them in a translocation-competent state. It also specifically binds to its receptor SecA. This is Protein-export protein SecB from Albidiferax ferrireducens (strain ATCC BAA-621 / DSM 15236 / T118) (Rhodoferax ferrireducens).